We begin with the raw amino-acid sequence, 94 residues long: Pyrimidine/purine nucleoside phosphorylase (94 aa).

The protein belongs to the nucleoside phosphorylase PpnP family.

The enzyme catalyses a purine D-ribonucleoside + phosphate = a purine nucleobase + alpha-D-ribose 1-phosphate. It catalyses the reaction adenosine + phosphate = alpha-D-ribose 1-phosphate + adenine. The catalysed reaction is cytidine + phosphate = cytosine + alpha-D-ribose 1-phosphate. It carries out the reaction guanosine + phosphate = alpha-D-ribose 1-phosphate + guanine. The enzyme catalyses inosine + phosphate = alpha-D-ribose 1-phosphate + hypoxanthine. It catalyses the reaction thymidine + phosphate = 2-deoxy-alpha-D-ribose 1-phosphate + thymine. The catalysed reaction is uridine + phosphate = alpha-D-ribose 1-phosphate + uracil. It carries out the reaction xanthosine + phosphate = alpha-D-ribose 1-phosphate + xanthine. Its function is as follows. Catalyzes the phosphorolysis of diverse nucleosides, yielding D-ribose 1-phosphate and the respective free bases. Can use uridine, adenosine, guanosine, cytidine, thymidine, inosine and xanthosine as substrates. Also catalyzes the reverse reactions. In Alcanivorax borkumensis (strain ATCC 700651 / DSM 11573 / NCIMB 13689 / SK2), this protein is Pyrimidine/purine nucleoside phosphorylase.